We begin with the raw amino-acid sequence, 309 residues long: Formimidoylglutamase (309 aa).

6 residues coordinate Mn(2+): histidine 128, aspartate 153, histidine 155, aspartate 157, cysteine 240, and aspartate 242.

The protein belongs to the arginase family. It depends on Mn(2+) as a cofactor.

The enzyme catalyses N-formimidoyl-L-glutamate + H2O = formamide + L-glutamate. Its pathway is amino-acid degradation; L-histidine degradation into L-glutamate; L-glutamate from N-formimidoyl-L-glutamate (hydrolase route): step 1/1. In terms of biological role, catalyzes the conversion of N-formimidoyl-L-glutamate to L-glutamate and formamide. This chain is Formimidoylglutamase, found in Staphylococcus carnosus (strain TM300).